The chain runs to 620 residues: 1-deoxy-D-xylulose-5-phosphate synthase (620 aa).

Residues H80 and 121-123 (GHS) each bind thiamine diphosphate. A Mg(2+)-binding site is contributed by D152. Thiamine diphosphate-binding positions include 153–154 (GA), N181, Y288, and E370. N181 provides a ligand contact to Mg(2+).

The protein belongs to the transketolase family. DXPS subfamily. Homodimer. It depends on Mg(2+) as a cofactor. Thiamine diphosphate serves as cofactor.

It catalyses the reaction D-glyceraldehyde 3-phosphate + pyruvate + H(+) = 1-deoxy-D-xylulose 5-phosphate + CO2. Its pathway is metabolic intermediate biosynthesis; 1-deoxy-D-xylulose 5-phosphate biosynthesis; 1-deoxy-D-xylulose 5-phosphate from D-glyceraldehyde 3-phosphate and pyruvate: step 1/1. In terms of biological role, catalyzes the acyloin condensation reaction between C atoms 2 and 3 of pyruvate and glyceraldehyde 3-phosphate to yield 1-deoxy-D-xylulose-5-phosphate (DXP). The protein is 1-deoxy-D-xylulose-5-phosphate synthase of Escherichia coli O7:K1 (strain IAI39 / ExPEC).